A 1457-amino-acid polypeptide reads, in one-letter code: Eye-specific diacylglycerol kinase (1457 aa).

Disordered stretches follow at residues 1–123 (MQQQ…SSEA), 136–177 (RSHS…PPCI), and 207–339 (YSNT…QPTT). 3 stretches are compositionally biased toward low complexity: residues 22 to 62 (SATT…LRTT), 98 to 115 (SQRA…SSAS), and 141 to 154 (DSAT…DSGT). Positions 214-253 (ASEDEDEVEGHNAEEEEEGSAAIEDAEEETTEAATEEADE) are enriched in acidic residues. Over residues 254-266 (DPRTEVESEHDHD) the composition is skewed to basic and acidic residues. Positions 294–303 (RLPRQMRRHT) are enriched in basic residues. 2 consecutive Phorbol-ester/DAG-type zinc fingers follow at residues 591–641 (HYWK…TLAC) and 661–724 (HHWV…GEEC). Positions 758 to 799 (NNAASGSGGGGAGGGAGGGGGKSKKQTQRRQKGKEEKKEPRA) are disordered. A compositionally biased stretch (gly residues) spans 763 to 778 (GSGGGGAGGGAGGGGG). Basic residues predominate over residues 779–789 (KSKKQTQRRQK). The DAGKc domain maps to 808-944 (PEVIPVIVFI…MDRWRVKVTP (137 aa)). The disordered stretch occupies residues 1264–1302 (TPDQERSFAAFSQRQAQNERRQMDQAQGRGPGSTDEDLQ). ANK repeat units follow at residues 1320–1349 (QTSD…SLQS), 1353–1382 (NGQT…RRLI), 1389–1418 (LGQT…HLDT), and 1422–1451 (GGNT…TQPV).

It belongs to the eukaryotic diacylglycerol kinase family. Expressed specifically in adult eye.

The protein localises to the membrane. It catalyses the reaction a 1,2-diacyl-sn-glycerol + ATP = a 1,2-diacyl-sn-glycero-3-phosphate + ADP + H(+). Functionally, required for the maintenance of phospholipid turnover within the photoreceptor. This Drosophila melanogaster (Fruit fly) protein is Eye-specific diacylglycerol kinase (rdgA).